The chain runs to 63 residues: Prokaryotic ubiquitin-like protein Pup (63 aa).

Over residues 1-11 the composition is skewed to basic and acidic residues; that stretch reads MAQEQTRRGGG. Residues 1-36 form a disordered region; sequence MAQEQTRRGGGGDDDEFTSSTSVGQERREKLTEETD. Residues 20–57 are ARC ATPase binding; it reads STSVGQERREKLTEETDDLLDEIDDVLEENAEDFVRAY. Residues 23-51 are a coiled coil; sequence VGQERREKLTEETDDLLDEIDDVLEENAE. Residue Q63 is modified to Deamidated glutamine. Residue Q63 forms an Isoglutamyl lysine isopeptide (Gln-Lys) (interchain with K-? in acceptor proteins) linkage.

It belongs to the prokaryotic ubiquitin-like protein family. Strongly interacts with the proteasome-associated ATPase ARC through a hydrophobic interface; the interacting region of Pup lies in its C-terminal half. There is one Pup binding site per ARC hexamer ring. Is modified by deamidation of its C-terminal glutamine to glutamate by the deamidase Dop, a prerequisite to the subsequent pupylation process.

Its pathway is protein degradation; proteasomal Pup-dependent pathway. In terms of biological role, protein modifier that is covalently attached to lysine residues of substrate proteins, thereby targeting them for proteasomal degradation. The tagging system is termed pupylation. The chain is Prokaryotic ubiquitin-like protein Pup from Mycobacterium leprae (strain Br4923).